A 945-amino-acid chain; its full sequence is Valine--tRNA ligase (945 aa).

The 'HIGH' region signature appears at 42-52; that stretch reads PNVTGTLHMGH. The short motif at 552–556 is the 'KMSKS' region element; that stretch reads KMSKS. An ATP-binding site is contributed by K555. Positions 879 to 945 form a coiled coil; it reads DKATETARLS…VQTQLSKLKD (67 aa).

Belongs to the class-I aminoacyl-tRNA synthetase family. ValS type 1 subfamily. As to quaternary structure, monomer.

The protein localises to the cytoplasm. The catalysed reaction is tRNA(Val) + L-valine + ATP = L-valyl-tRNA(Val) + AMP + diphosphate. Its function is as follows. Catalyzes the attachment of valine to tRNA(Val). As ValRS can inadvertently accommodate and process structurally similar amino acids such as threonine, to avoid such errors, it has a 'posttransfer' editing activity that hydrolyzes mischarged Thr-tRNA(Val) in a tRNA-dependent manner. This chain is Valine--tRNA ligase, found in Neisseria meningitidis serogroup A / serotype 4A (strain DSM 15465 / Z2491).